A 159-amino-acid chain; its full sequence is Phosphopantetheine adenylyltransferase (159 aa).

Position 9 (S9) interacts with substrate. ATP contacts are provided by residues 9-10 (SF) and H17. Positions 41, 73, and 87 each coordinate substrate. ATP-binding positions include 88–90 (GLR), E98, and 123–129 (YSYLSSS).

It belongs to the bacterial CoaD family. As to quaternary structure, homohexamer. Mg(2+) is required as a cofactor.

Its subcellular location is the cytoplasm. It catalyses the reaction (R)-4'-phosphopantetheine + ATP + H(+) = 3'-dephospho-CoA + diphosphate. It functions in the pathway cofactor biosynthesis; coenzyme A biosynthesis; CoA from (R)-pantothenate: step 4/5. Its function is as follows. Reversibly transfers an adenylyl group from ATP to 4'-phosphopantetheine, yielding dephospho-CoA (dPCoA) and pyrophosphate. The polypeptide is Phosphopantetheine adenylyltransferase (Clostridium botulinum (strain Eklund 17B / Type B)).